Consider the following 222-residue polypeptide: Superoxide dismutase [Mn], mitochondrial (222 aa).

The transit peptide at 1 to 24 (MLCRAACSAGRRLGPAASTAGSRH) directs the protein to the mitochondrion. His-50 contributes to the Mn(2+) binding site. Position 58 is a 3'-nitrotyrosine (Tyr-58). N6-acetyllysine; alternate is present on residues Lys-68 and Lys-75. 2 positions are modified to N6-succinyllysine; alternate: Lys-68 and Lys-75. Position 98 (His-98) interacts with Mn(2+). Lys-114 bears the N6-acetyllysine mark. Lys-122 and Lys-130 each carry N6-acetyllysine; alternate. 2 positions are modified to N6-succinyllysine; alternate: Lys-122 and Lys-130. Residues Asp-183 and His-187 each contribute to the Mn(2+) site. Lys-202 bears the N6-acetyllysine mark.

The protein belongs to the iron/manganese superoxide dismutase family. In terms of assembly, homotetramer. Mn(2+) is required as a cofactor. In terms of processing, nitrated under oxidative stress. Nitration coupled with oxidation inhibits the catalytic activity. Acetylation at Lys-122 decreases enzymatic activity. Deacetylated by SIRT3 upon exposure to ionizing radiations or after long fasting. Post-translationally, polyubiquitinated; leading to proteasomal degradation. Deubiquitinated by USP36 which increases protein stability.

Its subcellular location is the mitochondrion matrix. It catalyses the reaction 2 superoxide + 2 H(+) = H2O2 + O2. Functionally, destroys superoxide anion radicals which are normally produced within the cells and which are toxic to biological systems. The chain is Superoxide dismutase [Mn], mitochondrial (Sod2) from Rattus norvegicus (Rat).